The following is a 439-amino-acid chain: Lipoyl synthase, mitochondrial (439 aa).

The N-terminal 37 residues, 1–37 (MVASARGLRTLHSAHSSISALPASTVPRLQLAVSRCY), are a transit peptide targeting the mitochondrion. Residues cysteine 150, cysteine 155, cysteine 161, cysteine 181, cysteine 185, cysteine 188, and serine 396 each coordinate [4Fe-4S] cluster. Residues 164–385 (GSSKSAATAT…KERALEMGFL (222 aa)) enclose the Radical SAM core domain.

Belongs to the radical SAM superfamily. Lipoyl synthase family. Requires [4Fe-4S] cluster as cofactor.

It is found in the mitochondrion. The enzyme catalyses [[Fe-S] cluster scaffold protein carrying a second [4Fe-4S](2+) cluster] + N(6)-octanoyl-L-lysyl-[protein] + 2 oxidized [2Fe-2S]-[ferredoxin] + 2 S-adenosyl-L-methionine + 4 H(+) = [[Fe-S] cluster scaffold protein] + N(6)-[(R)-dihydrolipoyl]-L-lysyl-[protein] + 4 Fe(3+) + 2 hydrogen sulfide + 2 5'-deoxyadenosine + 2 L-methionine + 2 reduced [2Fe-2S]-[ferredoxin]. It participates in protein modification; protein lipoylation via endogenous pathway; protein N(6)-(lipoyl)lysine from octanoyl-[acyl-carrier-protein]: step 2/2. Its function is as follows. Catalyzes the radical-mediated insertion of two sulfur atoms into the C-6 and C-8 positions of the octanoyl moiety bound to the lipoyl domains of lipoate-dependent enzymes, thereby converting the octanoylated domains into lipoylated derivatives. The chain is Lipoyl synthase, mitochondrial from Paracoccidioides lutzii (strain ATCC MYA-826 / Pb01) (Paracoccidioides brasiliensis).